The primary structure comprises 160 residues: D-aminoacyl-tRNA deacylase (160 aa).

Positions 137–138 (GP) match the Gly-cisPro motif, important for rejection of L-amino acids motif.

The protein belongs to the DTD family. In terms of assembly, homodimer.

It is found in the cytoplasm. The enzyme catalyses glycyl-tRNA(Ala) + H2O = tRNA(Ala) + glycine + H(+). It catalyses the reaction a D-aminoacyl-tRNA + H2O = a tRNA + a D-alpha-amino acid + H(+). Functionally, an aminoacyl-tRNA editing enzyme that deacylates mischarged D-aminoacyl-tRNAs. Also deacylates mischarged glycyl-tRNA(Ala), protecting cells against glycine mischarging by AlaRS. Acts via tRNA-based rather than protein-based catalysis; rejects L-amino acids rather than detecting D-amino acids in the active site. By recycling D-aminoacyl-tRNA to D-amino acids and free tRNA molecules, this enzyme counteracts the toxicity associated with the formation of D-aminoacyl-tRNA entities in vivo and helps enforce protein L-homochirality. The polypeptide is D-aminoacyl-tRNA deacylase (Chloroflexus aurantiacus (strain ATCC 29364 / DSM 637 / Y-400-fl)).